Reading from the N-terminus, the 670-residue chain is Putative segment polarity protein dishevelled homolog DVL1P1 (670 aa).

One can recognise a DIX domain in the interval 1-85 (MAETKIIYHM…RVVSWLVLVE (85 aa)). The interval 89-240 (SDAGSQGTDS…ADRASSFSSM (152 aa)) is disordered. Over residues 142–151 (SHRRDRARRR) the composition is skewed to basic residues. Residues 152–171 (NREEAARTNGHPRGDRRRDV) show a composition bias toward basic and acidic residues. 2 stretches are compositionally biased toward low complexity: residues 176–192 (DSAS…SSFV) and 201–214 (SRLS…TSSR). Residues 215 to 228 (LIRKHKRRRRKQRL) are compositionally biased toward basic residues. One can recognise a PDZ domain in the interval 251 to 323 (TVTLNMERHH…NDDAVRVLRE (73 aa)). Positions 400-474 (PDSGLEIRDR…SEQCYYVFGD (75 aa)) constitute a DEP domain. Residues 518-642 (PGPPPCFPPA…PGGPPVRELA (125 aa)) are disordered. Low complexity-rich tracts occupy residues 526 to 553 (PAYQ…SSGS) and 600 to 614 (SRGS…SYAP).

The protein belongs to the DSH family. As to expression, expressed in thymus, heart, liver, kidney, brain, skeletal muscle, and pancreas.

The protein resides in the cytoplasm. Functionally, may play a role in the signal transduction pathway mediated by multiple Wnt genes. This is Putative segment polarity protein dishevelled homolog DVL1P1 (DVL1P1) from Homo sapiens (Human).